A 124-amino-acid polypeptide reads, in one-letter code: Protein BEX3 (124 aa).

A disordered region spans residues 1 to 56 (MANVHQENEEMEQPLQNGQEDRPVGGGEGHQPAANNNNNNHNHNHNHHRRGQARRL). Basic residues predominate over residues 42–53 (NHNHNHHRRGQA). The segment at 81–106 (EMFMEEMREIRRKLRELQLRNCLRIL) is interaction with p75NTR/NGFR. Positions 81–124 (EMFMEEMREIRRKLRELQLRNCLRILMGELSNHHDHHDEFCLMP) are interaction with 14-3-3 epsilon. A Nuclear export signal motif is present at residues 90–100 (IRRKLRELQLR). The his cluster stretch occupies residues 113–117 (HHDHH). Cysteine 121 provides a ligand contact to Zn(2+).

This sequence belongs to the BEX family. Self-associates. Binds to the DEATH domain of p75NTR/NGFR. Interacts with 14-3-3 epsilon (YWHAE). Interacts with DIABLO/SMAC. Ubiquitinated. Degraded by the proteasome. As to expression, widely expressed.

The protein localises to the nucleus. Its subcellular location is the cytoplasm. It is found in the cytosol. Functionally, may be a signaling adapter molecule involved in NGFR/p75NTR-mediated apoptosis induced by NGF. Plays a role in zinc-triggered neuronal death. In absence of reductive stress, acts as a pseudosubstrate for the CRL2(FEM1B) complex: associates with FEM1B via zinc, thereby preventing association between FEM1B and its substrates. The sequence is that of Protein BEX3 from Mus musculus (Mouse).